The following is a 69-amino-acid chain: UPF0435 protein SH1076 (69 aa).

Belongs to the UPF0435 family.

The chain is UPF0435 protein SH1076 from Staphylococcus haemolyticus (strain JCSC1435).